The chain runs to 211 residues: ATP-dependent Clp protease proteolytic subunit (211 aa).

Residue Ser114 is the Nucleophile of the active site. His139 is an active-site residue.

The protein belongs to the peptidase S14 family. Fourteen ClpP subunits assemble into 2 heptameric rings which stack back to back to give a disk-like structure with a central cavity, resembling the structure of eukaryotic proteasomes.

It localises to the cytoplasm. It catalyses the reaction Hydrolysis of proteins to small peptides in the presence of ATP and magnesium. alpha-casein is the usual test substrate. In the absence of ATP, only oligopeptides shorter than five residues are hydrolyzed (such as succinyl-Leu-Tyr-|-NHMec, and Leu-Tyr-Leu-|-Tyr-Trp, in which cleavage of the -Tyr-|-Leu- and -Tyr-|-Trp bonds also occurs).. Its function is as follows. Cleaves peptides in various proteins in a process that requires ATP hydrolysis. Has a chymotrypsin-like activity. Plays a major role in the degradation of misfolded proteins. The protein is ATP-dependent Clp protease proteolytic subunit of Pseudomonas fluorescens (strain SBW25).